The sequence spans 801 residues: Cadherin-20 (801 aa).

The signal sequence occupies residues 1–34 (MWTSGRMSNAKNWLGLGMSLYFWGLMDLTTTVLS). A propeptide spanning residues 35 to 59 (DTPTPQGELEALLSDKPQSHQRTKR) is cleaved from the precursor. At 60-619 (SWVWNQFFVL…AYMLPVSLSR (560 aa)) the chain is on the extracellular side. 5 Cadherin domains span residues 61–165 (WVWN…EPKF), 166–274 (LDGP…PPRF), 275–389 (PQKH…PPVF), 390–494 (EPGF…APEF), and 494–610 (FPRF…SPEA). N-linked (GlcNAc...) asparagine glycosylation is present at N261. N-linked (GlcNAc...) asparagine glycosylation is found at N420, N461, and N542. Residues 620–640 (GALIAILACIFVLLVLVLLIL) form a helical membrane-spanning segment. At 641–801 (SMRRHRKQPY…GASEGPAPLW (161 aa)) the chain is on the cytoplasmic side.

In terms of tissue distribution, expressed in placenta, adult brain, and fetal brain.

The protein localises to the cell membrane. Its function is as follows. Cadherins are calcium-dependent cell adhesion proteins. They preferentially interact with themselves in a homophilic manner in connecting cells; cadherins may thus contribute to the sorting of heterogeneous cell types. In Homo sapiens (Human), this protein is Cadherin-20 (CDH20).